The sequence spans 719 residues: DNA ligase (719 aa).

NAD(+) is bound by residues 42 to 46 (DAAYD), 92 to 93 (SL), and Glu-126. Lys-128 (N6-AMP-lysine intermediate) is an active-site residue. Residues Arg-149, Glu-185, Lys-301, and Lys-325 each contribute to the NAD(+) site. Residues Cys-430, Cys-433, Cys-448, and Cys-454 each coordinate Zn(2+). Residues 640 to 719 (ATGSPVEGKT…DDWFKLVGED (80 aa)) form the BRCT domain.

It belongs to the NAD-dependent DNA ligase family. LigA subfamily. Mg(2+) serves as cofactor. Requires Mn(2+) as cofactor.

The catalysed reaction is NAD(+) + (deoxyribonucleotide)n-3'-hydroxyl + 5'-phospho-(deoxyribonucleotide)m = (deoxyribonucleotide)n+m + AMP + beta-nicotinamide D-nucleotide.. Functionally, DNA ligase that catalyzes the formation of phosphodiester linkages between 5'-phosphoryl and 3'-hydroxyl groups in double-stranded DNA using NAD as a coenzyme and as the energy source for the reaction. It is essential for DNA replication and repair of damaged DNA. The sequence is that of DNA ligase from Brucella suis biovar 1 (strain 1330).